The primary structure comprises 458 residues: 3-isopropylmalate dehydratase large subunit (458 aa).

[4Fe-4S] cluster is bound by residues cysteine 339, cysteine 399, and cysteine 402.

This sequence belongs to the aconitase/IPM isomerase family. LeuC type 1 subfamily. As to quaternary structure, heterodimer of LeuC and LeuD. Requires [4Fe-4S] cluster as cofactor.

The enzyme catalyses (2R,3S)-3-isopropylmalate = (2S)-2-isopropylmalate. The protein operates within amino-acid biosynthesis; L-leucine biosynthesis; L-leucine from 3-methyl-2-oxobutanoate: step 2/4. Functionally, catalyzes the isomerization between 2-isopropylmalate and 3-isopropylmalate, via the formation of 2-isopropylmaleate. The sequence is that of 3-isopropylmalate dehydratase large subunit from Lactococcus lactis subsp. cremoris (strain SK11).